The primary structure comprises 386 residues: Methylthioribose-1-phosphate isomerase (386 aa).

Catalysis depends on Asp255, which acts as the Proton donor.

The protein belongs to the eIF-2B alpha/beta/delta subunits family. MtnA subfamily.

It is found in the cytoplasm. It localises to the nucleus. It catalyses the reaction 5-(methylsulfanyl)-alpha-D-ribose 1-phosphate = 5-(methylsulfanyl)-D-ribulose 1-phosphate. Its pathway is amino-acid biosynthesis; L-methionine biosynthesis via salvage pathway; L-methionine from S-methyl-5-thio-alpha-D-ribose 1-phosphate: step 1/6. In terms of biological role, catalyzes the interconversion of methylthioribose-1-phosphate (MTR-1-P) into methylthioribulose-1-phosphate (MTRu-1-P). The polypeptide is Methylthioribose-1-phosphate isomerase (Trypanosoma brucei brucei (strain 927/4 GUTat10.1)).